Consider the following 214-residue polypeptide: Pyridoxine/pyridoxamine 5'-phosphate oxidase (214 aa).

Substrate is bound by residues 8–11 (RINY) and Lys66. FMN-binding positions include 61–66 (RIVLIK), 76–77 (FT), Arg82, Lys83, and Gln105. Residues Tyr123, Arg127, and Ser131 each contribute to the substrate site. FMN-binding positions include 140 to 141 (QS) and Trp184. 190–192 (RLH) contributes to the substrate binding site. FMN is bound at residue Arg194.

Belongs to the pyridoxamine 5'-phosphate oxidase family. Homodimer. FMN serves as cofactor.

The enzyme catalyses pyridoxamine 5'-phosphate + O2 + H2O = pyridoxal 5'-phosphate + H2O2 + NH4(+). It catalyses the reaction pyridoxine 5'-phosphate + O2 = pyridoxal 5'-phosphate + H2O2. It functions in the pathway cofactor metabolism; pyridoxal 5'-phosphate salvage; pyridoxal 5'-phosphate from pyridoxamine 5'-phosphate: step 1/1. The protein operates within cofactor metabolism; pyridoxal 5'-phosphate salvage; pyridoxal 5'-phosphate from pyridoxine 5'-phosphate: step 1/1. Functionally, catalyzes the oxidation of either pyridoxine 5'-phosphate (PNP) or pyridoxamine 5'-phosphate (PMP) into pyridoxal 5'-phosphate (PLP). The protein is Pyridoxine/pyridoxamine 5'-phosphate oxidase of Burkholderia ambifaria (strain ATCC BAA-244 / DSM 16087 / CCUG 44356 / LMG 19182 / AMMD) (Burkholderia cepacia (strain AMMD)).